We begin with the raw amino-acid sequence, 355 residues long: MIGGKKKCIGLIFGGNSNEHEVSISSAKTVFQAFKSEINKERFTIRAFYINKYGDWLDSDSSEKILIDESKNKNTTKKQIFNQEKINFLDGVDFQNVDVWFPLLHGINGEDGSIHGLLRFTKKPLVGCGIIGSALGMDKILMKIIFSNLKIPQVNYLVFQNQDLNDEEVKNKLIHEILKKLNFPVFVKPSNSGSSLGISKVINKSEIIPALEKARGIDPSILIEEGLEVREIECGIIGNSKLLTSEIGEVNYKSDWYDYNSKYHSNNKIIIPAEIDSKISKEIKEIAIKSCRALNIFGFARVDFFLEKSSNKIFLNEINTIPGFTKNSMFPMLWKASGLKIEQLVAKLVDISLDL.

In terms of domain architecture, ATP-grasp spans 143 to 350 (KIIFSNLKIP…IEQLVAKLVD (208 aa)). Position 178–233 (178–233 (LKKLNFPVFVKPSNSGSSLGISKVINKSEIIPALEKARGIDPSILIEEGLEVREIE)) interacts with ATP. Mg(2+) contacts are provided by D303, E317, and N319.

The protein belongs to the D-alanine--D-alanine ligase family. Mg(2+) is required as a cofactor. It depends on Mn(2+) as a cofactor.

The protein resides in the cytoplasm. It catalyses the reaction 2 D-alanine + ATP = D-alanyl-D-alanine + ADP + phosphate + H(+). Its pathway is cell wall biogenesis; peptidoglycan biosynthesis. Functionally, cell wall formation. This Prochlorococcus marinus (strain AS9601) protein is D-alanine--D-alanine ligase.